We begin with the raw amino-acid sequence, 445 residues long: tRNA modification GTPase MnmE (445 aa).

The (6S)-5-formyl-5,6,7,8-tetrahydrofolate site is built by Arg20, Glu79, and Lys119. The TrmE-type G domain maps to 215–371 (GLKLAIIGPP…ILKNIENIAE (157 aa)). K(+) is bound at residue Asn225. GTP-binding positions include 225-230 (NVGKSS), 244-250 (SNIAGTT), and 269-272 (DTAG). Position 229 (Ser229) interacts with Mg(2+). Residues Ser244, Ile246, and Thr249 each coordinate K(+). Thr250 serves as a coordination point for Mg(2+). Lys445 is a (6S)-5-formyl-5,6,7,8-tetrahydrofolate binding site.

The protein belongs to the TRAFAC class TrmE-Era-EngA-EngB-Septin-like GTPase superfamily. TrmE GTPase family. In terms of assembly, homodimer. Heterotetramer of two MnmE and two MnmG subunits. K(+) serves as cofactor.

It localises to the cytoplasm. In terms of biological role, exhibits a very high intrinsic GTPase hydrolysis rate. Involved in the addition of a carboxymethylaminomethyl (cmnm) group at the wobble position (U34) of certain tRNAs, forming tRNA-cmnm(5)s(2)U34. This chain is tRNA modification GTPase MnmE, found in Rickettsia conorii (strain ATCC VR-613 / Malish 7).